We begin with the raw amino-acid sequence, 431 residues long: MFKTISNFMRVSDIRNKIIFTLLMLIVFRIGAFIPVPYVNAEALQAQSQMGVFDLLNTFGGGALYQFSIFAMGITPYITASIIIQLLQMDVVPKFTEWSKQGEVGRRKLAQFTRYFTIVLGFIQALGMSYGFNNLANGMLIEKSGVSTYLIIALVLTGGTAFLMWLGEQITSHGVGNGISIIIFAGIVSSIPKTIGQIYETQFVGSNDQLFIHIVKVALLVIAILAVIVGVIFIQQAVRKIAIQYAKGTGRSPAGGGQSTHLPLKVNPAGVIPVIFAVAFLITPRTIASFFGTNDVTKWIQNNFDNTHPVGMAIYVALIIAFTYFYAFVQVNPEQMADNLKKQGGYIPGVRPGKMTQDRITSILYRLTFVGSIFLAVISILPIFFIQFAGLPQSAQIGGTSLLIVVGVALETMKQLESQLVKRNYRGFMKN.

Over 1–17 the chain is Cytoplasmic; it reads MFKTISNFMRVSDIRNK. The helical transmembrane segment at 18–38 threads the bilayer; the sequence is IIFTLLMLIVFRIGAFIPVPY. Over 39–66 the chain is Extracellular; sequence VNAEALQAQSQMGVFDLLNTFGGGALYQ. The helical transmembrane segment at 67-87 threads the bilayer; that stretch reads FSIFAMGITPYITASIIIQLL. Residues 88-115 are Cytoplasmic-facing; it reads QMDVVPKFTEWSKQGEVGRRKLAQFTRY. The chain crosses the membrane as a helical span at residues 116–136; it reads FTIVLGFIQALGMSYGFNNLA. The Extracellular segment spans residues 137-145; the sequence is NGMLIEKSG. The helical transmembrane segment at 146-166 threads the bilayer; it reads VSTYLIIALVLTGGTAFLMWL. Topologically, residues 167 to 177 are cytoplasmic; it reads GEQITSHGVGN. Residues 178 to 198 form a helical membrane-spanning segment; the sequence is GISIIIFAGIVSSIPKTIGQI. Residues 199–213 lie on the Extracellular side of the membrane; sequence YETQFVGSNDQLFIH. Residues 214–234 form a helical membrane-spanning segment; that stretch reads IVKVALLVIAILAVIVGVIFI. Topologically, residues 235–261 are cytoplasmic; the sequence is QQAVRKIAIQYAKGTGRSPAGGGQSTH. A helical transmembrane segment spans residues 262-282; that stretch reads LPLKVNPAGVIPVIFAVAFLI. Residues 283–308 are Extracellular-facing; the sequence is TPRTIASFFGTNDVTKWIQNNFDNTH. Residues 309 to 329 form a helical membrane-spanning segment; it reads PVGMAIYVALIIAFTYFYAFV. The Cytoplasmic segment spans residues 330–368; sequence QVNPEQMADNLKKQGGYIPGVRPGKMTQDRITSILYRLT. A run of 2 helical transmembrane segments spans residues 369-389 and 390-410; these read FVGSIFLAVISILPIFFIQFA and GLPQSAQIGGTSLLIVVGVAL. At 411–431 the chain is on the cytoplasmic side; that stretch reads ETMKQLESQLVKRNYRGFMKN.

It belongs to the SecY/SEC61-alpha family. In terms of assembly, component of the Sec protein translocase complex. Heterotrimer consisting of SecY, SecE and SecG subunits. The heterotrimers can form oligomers, although 1 heterotrimer is thought to be able to translocate proteins. Interacts with the ribosome. Interacts with SecDF, and other proteins may be involved. Interacts with SecA. Interacts with FloT.

The protein resides in the cell membrane. Its subcellular location is the membrane raft. Its function is as follows. The central subunit of the protein translocation channel SecYEG. Consists of two halves formed by TMs 1-5 and 6-10. These two domains form a lateral gate at the front which open onto the bilayer between TMs 2 and 7, and are clamped together by SecE at the back. The channel is closed by both a pore ring composed of hydrophobic SecY resides and a short helix (helix 2A) on the extracellular side of the membrane which forms a plug. The plug probably moves laterally to allow the channel to open. The ring and the pore may move independently. The polypeptide is Protein translocase subunit SecY (Bacillus subtilis (strain 168)).